The sequence spans 554 residues: Carboxypeptidase Y homolog A (554 aa).

The first 17 residues, 1–17 (MRISASTVLLGAASAAS), serve as a signal peptide directing secretion. The propeptide occupies 18–137 (AASFQNQAQQ…QLDNFNLRVK (120 aa)). 5 cysteine pairs are disulfide-bonded: Cys191–Cys431, Cys325–Cys339, Cys349–Cys372, Cys356–Cys365, and Cys394–Cys401. The N-linked (GlcNAc...) asparagine glycan is linked to Asn222. The active site involves Ser278. The active site involves Asp470. The N-linked (GlcNAc...) asparagine glycan is linked to Asn518. His529 is a catalytic residue.

This sequence belongs to the peptidase S10 family.

The protein localises to the vacuole. It carries out the reaction Release of a C-terminal amino acid with broad specificity.. Vacuolar carboxypeptidase involved in degradation of small peptides. Digests preferentially peptides containing an aliphatic or hydrophobic residue in P1' position, as well as methionine, leucine or phenylalanine in P1 position of ester substrate. This chain is Carboxypeptidase Y homolog A (CPYA), found in Sordaria macrospora (strain ATCC MYA-333 / DSM 997 / K(L3346) / K-hell).